The sequence spans 227 residues: Cytochrome c oxidase subunit 2 (227 aa).

The Mitochondrial intermembrane portion of the chain corresponds to 1 to 14 (MAYPFQLGLQDATS). Residues 15 to 45 (PIMEELTNFHDHTLMIVFLISSLVLYIISLM) traverse the membrane as a helical segment. The Mitochondrial matrix segment spans residues 46–59 (LTTKLTHTSTMDAQ). The helical transmembrane segment at 60-87 (EVETIWTILPAVILILIALPSLRILYMM) threads the bilayer. Residues 88–227 (DEINNPVLTV…HFENWSASMI (140 aa)) are Mitochondrial intermembrane-facing. Residues His161, Cys196, Glu198, Cys200, His204, and Met207 each contribute to the Cu cation site. Residue Glu198 participates in Mg(2+) binding.

The protein belongs to the cytochrome c oxidase subunit 2 family. Component of the cytochrome c oxidase (complex IV, CIV), a multisubunit enzyme composed of 14 subunits. The complex is composed of a catalytic core of 3 subunits MT-CO1, MT-CO2 and MT-CO3, encoded in the mitochondrial DNA, and 11 supernumerary subunits COX4I, COX5A, COX5B, COX6A, COX6B, COX6C, COX7A, COX7B, COX7C, COX8 and NDUFA4, which are encoded in the nuclear genome. The complex exists as a monomer or a dimer and forms supercomplexes (SCs) in the inner mitochondrial membrane with NADH-ubiquinone oxidoreductase (complex I, CI) and ubiquinol-cytochrome c oxidoreductase (cytochrome b-c1 complex, complex III, CIII), resulting in different assemblies (supercomplex SCI(1)III(2)IV(1) and megacomplex MCI(2)III(2)IV(2)). Found in a complex with TMEM177, COA6, COX18, COX20, SCO1 and SCO2. Interacts with TMEM177 in a COX20-dependent manner. Interacts with COX20. Interacts with COX16. Cu cation is required as a cofactor.

The protein localises to the mitochondrion inner membrane. The catalysed reaction is 4 Fe(II)-[cytochrome c] + O2 + 8 H(+)(in) = 4 Fe(III)-[cytochrome c] + 2 H2O + 4 H(+)(out). Its function is as follows. Component of the cytochrome c oxidase, the last enzyme in the mitochondrial electron transport chain which drives oxidative phosphorylation. The respiratory chain contains 3 multisubunit complexes succinate dehydrogenase (complex II, CII), ubiquinol-cytochrome c oxidoreductase (cytochrome b-c1 complex, complex III, CIII) and cytochrome c oxidase (complex IV, CIV), that cooperate to transfer electrons derived from NADH and succinate to molecular oxygen, creating an electrochemical gradient over the inner membrane that drives transmembrane transport and the ATP synthase. Cytochrome c oxidase is the component of the respiratory chain that catalyzes the reduction of oxygen to water. Electrons originating from reduced cytochrome c in the intermembrane space (IMS) are transferred via the dinuclear copper A center (CU(A)) of subunit 2 and heme A of subunit 1 to the active site in subunit 1, a binuclear center (BNC) formed by heme A3 and copper B (CU(B)). The BNC reduces molecular oxygen to 2 water molecules using 4 electrons from cytochrome c in the IMS and 4 protons from the mitochondrial matrix. The polypeptide is Cytochrome c oxidase subunit 2 (MT-CO2) (Batomys granti (Luzon hairy-tailed rat)).